Here is an 836-residue protein sequence, read N- to C-terminus: General vesicular transport factor p115 (836 aa).

Positions 1 to 22 (MEFLKSGIKTVLGSTEPGQQPS) are disordered. Positions 12–22 (LGSTEPGQQPS) are enriched in polar residues. 11 ARM repeats span residues 24 to 64 (AETV…VGAQ), 65 to 124 (GMPP…IKTP), 126 to 166 (HVTL…LILV), 169 to 210 (MGVS…VAFE), 211 to 256 (NAFD…FKEG), 316 to 359 (RLLH…LGRV), 368 to 413 (PAIV…QTLL), 424 to 463 (STGQ…EELL), 477 to 518 (TLLE…KALL), 523 to 577 (TMAY…IIKR), and 579 to 636 (GQES…LVSG). 2 coiled-coil regions span residues 663-707 (IIRG…DQNT) and 744-806 (NMYF…EEAG). Residues 803–836 (EEAGSTNTLPTSNVAPSVPAAGGGSPIPSGTASR) form a disordered region. Positions 806-816 (GSTNTLPTSNV) are enriched in polar residues. Residues 817 to 836 (APSVPAAGGGSPIPSGTASR) show a composition bias toward low complexity.

Belongs to the VDP/USO1/EDE1 family.

The protein resides in the cytoplasm. Its subcellular location is the golgi apparatus. It is found in the golgi stack. The protein localises to the golgi stack membrane. It localises to the endoplasmic reticulum. The protein resides in the endoplasmic reticulum membrane. Functionally, essential for maintaining the architecture of the Golgi stacks and for normal organization of the transitional endoplasmic reticulum (tER). Required for both the formation of the Golgi stacks and the maintenance of the individual cisternae. This Drosophila melanogaster (Fruit fly) protein is General vesicular transport factor p115.